The primary structure comprises 492 residues: Catalase (492 aa).

Active-site residues include His65 and Asn138. Residue Tyr348 participates in heme binding.

The protein belongs to the catalase family. In terms of assembly, homotetramer. Heme serves as cofactor.

It localises to the cytoplasm. It is found in the cytosol. The protein localises to the peroxisome matrix. It carries out the reaction 2 H2O2 = O2 + 2 H2O. Catalyzes the degradation of hydrogen peroxide (H(2)O(2)) generated by peroxisomal oxidases to water and oxygen, thereby protecting cells from the toxic effects of hydrogen peroxide. This Vigna radiata var. radiata (Mung bean) protein is Catalase.